Reading from the N-terminus, the 302-residue chain is Sulfate adenylyltransferase subunit 2 (302 aa).

The segment at 280-302 (RQGRLIDSDQSASMEQKKRQGYF) is disordered.

This sequence belongs to the PAPS reductase family. CysD subfamily. In terms of assembly, heterodimer composed of CysD, the smaller subunit, and CysN.

The catalysed reaction is sulfate + ATP + H(+) = adenosine 5'-phosphosulfate + diphosphate. It participates in sulfur metabolism; hydrogen sulfide biosynthesis; sulfite from sulfate: step 1/3. In terms of biological role, with CysN forms the ATP sulfurylase (ATPS) that catalyzes the adenylation of sulfate producing adenosine 5'-phosphosulfate (APS) and diphosphate, the first enzymatic step in sulfur assimilation pathway. APS synthesis involves the formation of a high-energy phosphoric-sulfuric acid anhydride bond driven by GTP hydrolysis by CysN coupled to ATP hydrolysis by CysD. The chain is Sulfate adenylyltransferase subunit 2 from Shewanella baltica (strain OS185).